A 449-amino-acid chain; its full sequence is L-lysine-epsilon aminotransferase (449 aa).

Residues G128 and A129 each coordinate pyridoxal 5'-phosphate. Positions 170 and 274 each coordinate 2-oxoglutarate. L-lysine is bound at residue R170. Position 274 (Q274) interacts with pyridoxal 5'-phosphate. K300 bears the N6-(pyridoxal phosphate)lysine mark. Residue R422 coordinates 2-oxoglutarate.

Belongs to the class-III pyridoxal-phosphate-dependent aminotransferase family. Pyridoxal 5'-phosphate serves as cofactor.

It catalyses the reaction L-lysine + 2-oxoglutarate = (S)-2-amino-6-oxohexanoate + L-glutamate. In terms of biological role, catalyzes the transfer of the terminal amino group of L-lysine to alpha-ketoglutarate to yield L-glutamate and 2-aminoadipate 6-semialdehyde ((S)-2-amino-6-oxohexanoate), which is spontaneously converted to the dehydrated form 1-piperideine 6-carboxylate. The protein is L-lysine-epsilon aminotransferase of Mycobacterium bovis (strain ATCC BAA-935 / AF2122/97).